The following is a 250-amino-acid chain: MTVERVSAPTPAAFVDAANAAFRNGAVLSVQARCEVEYNGRTSGYLGDGDRLLVAKPDGTFLVHQPTGHKPVNWMPGGGTVEARTSQGDAVLLARRSNPTERVETRLHEVYGVTRFDAEDGATYEESGTEAEMHEYIEANPDALEAGLRIVEHERETKYGFIDFYAVDGDGTPVVIEVKRIQATLNHFDQLKRYVDRYAETNDDVRGMLVAPSASERVTRALRDNGLEFVALAEFGLDAKGATEAKLTDF.

The protein belongs to the NucS endonuclease family.

The protein resides in the cytoplasm. Its function is as follows. Cleaves both 3' and 5' ssDNA extremities of branched DNA structures. The chain is Endonuclease NucS 2 from Halobacterium salinarum (strain ATCC 700922 / JCM 11081 / NRC-1) (Halobacterium halobium).